Reading from the N-terminus, the 322-residue chain is Transaldolase (322 aa).

The active-site Schiff-base intermediate with substrate is the lysine 136.

It belongs to the transaldolase family. Type 1 subfamily. As to quaternary structure, homodimer.

The protein localises to the cytoplasm. The catalysed reaction is D-sedoheptulose 7-phosphate + D-glyceraldehyde 3-phosphate = D-erythrose 4-phosphate + beta-D-fructose 6-phosphate. It functions in the pathway carbohydrate degradation; pentose phosphate pathway; D-glyceraldehyde 3-phosphate and beta-D-fructose 6-phosphate from D-ribose 5-phosphate and D-xylulose 5-phosphate (non-oxidative stage): step 2/3. In terms of biological role, transaldolase is important for the balance of metabolites in the pentose-phosphate pathway. This Xanthomonas oryzae pv. oryzae (strain MAFF 311018) protein is Transaldolase.